Consider the following 187-residue polypeptide: UPF0301 protein GOX1459 (187 aa).

It belongs to the UPF0301 (AlgH) family.

The chain is UPF0301 protein GOX1459 from Gluconobacter oxydans (strain 621H) (Gluconobacter suboxydans).